The chain runs to 435 residues: Adenylosuccinate synthetase (435 aa).

Residues 11–17 (GDEGKGK) and 39–41 (GHT) contribute to the GTP site. D12 functions as the Proton acceptor in the catalytic mechanism. Mg(2+) is bound by residues D12 and G39. IMP contacts are provided by residues 12–15 (DEGK), 37–40 (NAGH), T128, R142, Q223, T238, and R302. The Proton donor role is filled by H40. Position 298–304 (298–304 (SVTGRPR)) interacts with substrate. GTP-binding positions include R304, 330-332 (KLD), and 412-414 (STG).

The protein belongs to the adenylosuccinate synthetase family. Homodimer. Mg(2+) serves as cofactor.

The protein resides in the cytoplasm. It carries out the reaction IMP + L-aspartate + GTP = N(6)-(1,2-dicarboxyethyl)-AMP + GDP + phosphate + 2 H(+). The protein operates within purine metabolism; AMP biosynthesis via de novo pathway; AMP from IMP: step 1/2. Functionally, plays an important role in the de novo pathway of purine nucleotide biosynthesis. Catalyzes the first committed step in the biosynthesis of AMP from IMP. The chain is Adenylosuccinate synthetase from Coxiella burnetii (strain RSA 493 / Nine Mile phase I).